The sequence spans 403 residues: Aspartic endopeptidase PEP1 (403 aa).

A signal peptide spans 1-20 (MVQISQIGAVLAVCSTLTVA). The propeptide at 21 to 67 (APTKGKARFNVPQVAVPMKAVHHPAVAYARALHKFGMKVPKAVSDAA) is activation peptide. The Peptidase A1 domain maps to 82–400 (YVTQVTVGQG…DTEGPRIGFA (319 aa)). D98 is a catalytic residue. N-linked (GlcNAc...) asparagine glycosylation is found at N159 and N270. Residue D293 is part of the active site. C329 and C361 are disulfide-bonded.

It belongs to the peptidase A1 family.

Its subcellular location is the secreted. The enzyme catalyses Hydrolysis of proteins with broad specificity. Generally favors hydrophobic residues in P1 and P1', but also accepts Lys in P1, which leads to activation of trypsinogen. Does not clot milk.. In terms of biological role, secreted aspartic endopeptidase that allows assimilation of proteinaceous substrates. Can catalyze hydrolysis of the major structural proteins of basement membrane, elastin, collagen, and laminin. Thought to play a significant role in virulence. Its function is as follows. Can catalyze hydrolysis of the major structural proteins of basement membrane, elastin, collagen, and laminin. Thought to play a significant role in virulence. This chain is Aspartic endopeptidase PEP1 (PEP1), found in Trichophyton verrucosum (strain HKI 0517).